Here is a 229-residue protein sequence, read N- to C-terminus: MKQVRLLPSAPVRAVCALAVAALAGCAQIPRDPIIQQPMTAQPPMPMSMQAPGSIYNPGYAGRPLFEDQRPRNVGDILTIMIAENINATKSSGANTNRQGNTDFSVPTAGFLGGLFAKANMSAAGANKFAATGGASAANTFNGTITVTVTNVLPNGNLVVSGEKQMLINQGNEFVRFSGVVNPNTISGANSVYSTQVADAKIEYSSKGYINEAETMGWLQRFFLNLAPW.

The first 25 residues, 1 to 25 (MKQVRLLPSAPVRAVCALAVAALAG), serve as a signal peptide directing secretion. Cys26 carries N-palmitoyl cysteine lipidation. The S-diacylglycerol cysteine moiety is linked to residue Cys26.

This sequence belongs to the FlgH family. In terms of assembly, the basal body constitutes a major portion of the flagellar organelle and consists of four rings (L,P,S, and M) mounted on a central rod.

It is found in the cell outer membrane. It localises to the bacterial flagellum basal body. Functionally, assembles around the rod to form the L-ring and probably protects the motor/basal body from shearing forces during rotation. The polypeptide is Flagellar L-ring protein (Burkholderia ambifaria (strain MC40-6)).